A 393-amino-acid polypeptide reads, in one-letter code: NAD(P)H-quinone oxidoreductase subunit H, chloroplastic (393 aa).

This sequence belongs to the complex I 49 kDa subunit family. As to quaternary structure, NDH is composed of at least 16 different subunits, 5 of which are encoded in the nucleus.

It localises to the plastid. The protein localises to the chloroplast thylakoid membrane. The enzyme catalyses a plastoquinone + NADH + (n+1) H(+)(in) = a plastoquinol + NAD(+) + n H(+)(out). The catalysed reaction is a plastoquinone + NADPH + (n+1) H(+)(in) = a plastoquinol + NADP(+) + n H(+)(out). NDH shuttles electrons from NAD(P)H:plastoquinone, via FMN and iron-sulfur (Fe-S) centers, to quinones in the photosynthetic chain and possibly in a chloroplast respiratory chain. The immediate electron acceptor for the enzyme in this species is believed to be plastoquinone. Couples the redox reaction to proton translocation, and thus conserves the redox energy in a proton gradient. The chain is NAD(P)H-quinone oxidoreductase subunit H, chloroplastic from Calycanthus floridus var. glaucus (Eastern sweetshrub).